The sequence spans 313 residues: Methionyl-tRNA formyltransferase (313 aa).

Residue 113 to 116 coordinates (6S)-5,6,7,8-tetrahydrofolate; sequence SLLP.

It belongs to the Fmt family.

It catalyses the reaction L-methionyl-tRNA(fMet) + (6R)-10-formyltetrahydrofolate = N-formyl-L-methionyl-tRNA(fMet) + (6S)-5,6,7,8-tetrahydrofolate + H(+). Functionally, attaches a formyl group to the free amino group of methionyl-tRNA(fMet). The formyl group appears to play a dual role in the initiator identity of N-formylmethionyl-tRNA by promoting its recognition by IF2 and preventing the misappropriation of this tRNA by the elongation apparatus. In Francisella tularensis subsp. holarctica (strain FTNF002-00 / FTA), this protein is Methionyl-tRNA formyltransferase.